Here is a 153-residue protein sequence, read N- to C-terminus: SsrA-binding protein (153 aa).

The protein belongs to the SmpB family.

The protein resides in the cytoplasm. In terms of biological role, required for rescue of stalled ribosomes mediated by trans-translation. Binds to transfer-messenger RNA (tmRNA), required for stable association of tmRNA with ribosomes. tmRNA and SmpB together mimic tRNA shape, replacing the anticodon stem-loop with SmpB. tmRNA is encoded by the ssrA gene; the 2 termini fold to resemble tRNA(Ala) and it encodes a 'tag peptide', a short internal open reading frame. During trans-translation Ala-aminoacylated tmRNA acts like a tRNA, entering the A-site of stalled ribosomes, displacing the stalled mRNA. The ribosome then switches to translate the ORF on the tmRNA; the nascent peptide is terminated with the 'tag peptide' encoded by the tmRNA and targeted for degradation. The ribosome is freed to recommence translation, which seems to be the essential function of trans-translation. The sequence is that of SsrA-binding protein from Paramagnetospirillum magneticum (strain ATCC 700264 / AMB-1) (Magnetospirillum magneticum).